Consider the following 406-residue polypeptide: Tryptophan 2,3-dioxygenase (406 aa).

Ser19 carries the phosphoserine modification. Substrate-binding positions include 72–76 and Arg144; that span reads FIITH. His328 is a binding site for heme. Residue Thr342 participates in substrate binding.

The protein belongs to the tryptophan 2,3-dioxygenase family. As to quaternary structure, homotetramer. Dimer of dimers. The cofactor is heme.

It catalyses the reaction L-tryptophan + O2 = N-formyl-L-kynurenine. It participates in amino-acid degradation; L-tryptophan degradation via kynurenine pathway; L-kynurenine from L-tryptophan: step 1/2. Functionally, heme-dependent dioxygenase that catalyzes the oxidative cleavage of the L-tryptophan (L-Trp) pyrrole ring and converts L-tryptophan to N-formyl-L-kynurenine. Catalyzes the oxidative cleavage of the indole moiety. The protein is Tryptophan 2,3-dioxygenase of Bos taurus (Bovine).